The primary structure comprises 161 residues: RNA pyrophosphohydrolase (161 aa).

The 147-residue stretch at 9–155 (PYRPCVGVML…KRRVYRQVVD (147 aa)) folds into the Nudix hydrolase domain. The Nudix box signature appears at 44–65 (GGIDDGEELHPAALRELSEETG).

The protein belongs to the Nudix hydrolase family. RppH subfamily. A divalent metal cation is required as a cofactor.

In terms of biological role, accelerates the degradation of transcripts by removing pyrophosphate from the 5'-end of triphosphorylated RNA, leading to a more labile monophosphorylated state that can stimulate subsequent ribonuclease cleavage. The sequence is that of RNA pyrophosphohydrolase from Novosphingobium aromaticivorans (strain ATCC 700278 / DSM 12444 / CCUG 56034 / CIP 105152 / NBRC 16084 / F199).